Consider the following 390-residue polypeptide: Phosphopentomutase (390 aa).

Mn(2+)-binding residues include Asp12, Asp284, His289, Asp325, His326, and His337.

The protein belongs to the phosphopentomutase family. It depends on Mn(2+) as a cofactor.

It localises to the cytoplasm. It catalyses the reaction 2-deoxy-alpha-D-ribose 1-phosphate = 2-deoxy-D-ribose 5-phosphate. The enzyme catalyses alpha-D-ribose 1-phosphate = D-ribose 5-phosphate. It functions in the pathway carbohydrate degradation; 2-deoxy-D-ribose 1-phosphate degradation; D-glyceraldehyde 3-phosphate and acetaldehyde from 2-deoxy-alpha-D-ribose 1-phosphate: step 1/2. Its function is as follows. Isomerase that catalyzes the conversion of deoxy-ribose 1-phosphate (dRib-1-P) and ribose 1-phosphate (Rib-1-P) to deoxy-ribose 5-phosphate (dRib-5-P) and ribose 5-phosphate (Rib-5-P), respectively. The polypeptide is Phosphopentomutase (Macrococcus caseolyticus (strain JCSC5402) (Macrococcoides caseolyticum)).